A 103-amino-acid polypeptide reads, in one-letter code: Small ribosomal subunit protein bS18c (103 aa).

This sequence belongs to the bacterial ribosomal protein bS18 family. In terms of assembly, part of the 30S ribosomal subunit.

The protein localises to the plastid. The protein resides in the chloroplast. In Buxus microphylla (Littleleaf boxwood), this protein is Small ribosomal subunit protein bS18c.